We begin with the raw amino-acid sequence, 465 residues long: Cysteine--tRNA ligase (465 aa).

Cys-30 provides a ligand contact to Zn(2+). The short motif at 32 to 42 (ITVYDYCHVGH) is the 'HIGH' region element. Positions 214, 239, and 243 each coordinate Zn(2+). The 'KMSKS' region motif lies at 271-275 (KMSKS). Position 274 (Lys-274) interacts with ATP.

Belongs to the class-I aminoacyl-tRNA synthetase family. In terms of assembly, monomer. Requires Zn(2+) as cofactor.

Its subcellular location is the cytoplasm. The enzyme catalyses tRNA(Cys) + L-cysteine + ATP = L-cysteinyl-tRNA(Cys) + AMP + diphosphate. The sequence is that of Cysteine--tRNA ligase from Burkholderia ambifaria (strain MC40-6).